The following is a 132-amino-acid chain: Small ribosomal subunit protein uS8 (132 aa).

This sequence belongs to the universal ribosomal protein uS8 family. As to quaternary structure, part of the 30S ribosomal subunit. Contacts proteins S5 and S12.

Functionally, one of the primary rRNA binding proteins, it binds directly to 16S rRNA central domain where it helps coordinate assembly of the platform of the 30S subunit. The protein is Small ribosomal subunit protein uS8 of Francisella tularensis subsp. tularensis (strain FSC 198).